A 485-amino-acid chain; its full sequence is NADH-quinone oxidoreductase subunit N (485 aa).

Helical transmembrane passes span 8–28 (LIAL…MLSI), 35–55 (FINT…LYFV), 75–95 (LYIG…YSWL), 104–124 (EFYL…CANH), 125–145 (LASL…LIGY), 159–179 (YMLL…LLYA), 203–223 (ILSG…LVPF), 235–255 (PAPV…AVVI), 271–291 (TVLT…ALTQ), 297–317 (LLGY…VAVQ), 326–346 (VGIY…VVSL), 383–403 (LAGI…VLGV), 406–426 (ELWW…YYYL), and 455–475 (MVVL…QPLI).

The protein belongs to the complex I subunit 2 family. As to quaternary structure, NDH-1 is composed of 13 different subunits. Subunits NuoA, H, J, K, L, M, N constitute the membrane sector of the complex.

The protein localises to the cell inner membrane. It catalyses the reaction a quinone + NADH + 5 H(+)(in) = a quinol + NAD(+) + 4 H(+)(out). Its function is as follows. NDH-1 shuttles electrons from NADH, via FMN and iron-sulfur (Fe-S) centers, to quinones in the respiratory chain. The immediate electron acceptor for the enzyme in this species is believed to be ubiquinone. Couples the redox reaction to proton translocation (for every two electrons transferred, four hydrogen ions are translocated across the cytoplasmic membrane), and thus conserves the redox energy in a proton gradient. The protein is NADH-quinone oxidoreductase subunit N of Photorhabdus laumondii subsp. laumondii (strain DSM 15139 / CIP 105565 / TT01) (Photorhabdus luminescens subsp. laumondii).